The primary structure comprises 565 residues: Sensor histidine kinase MtrB (565 aa).

The segment covering 1–13 has biased composition (basic residues); that stretch reads MMWGSRRRTRSRW. Positions 1 to 21 are disordered; sequence MMWGSRRRTRSRWGRSGPMTR. Transmembrane regions (helical) follow at residues 42 to 62 and 213 to 233; these read VVAL…FVLT and GTMI…ALLV. The 53-residue stretch at 235-287 folds into the HAMP domain; sequence RQVVVPVRSASRIAERFAEGHLSERMPVRGEDDMARLAMSFNDMAESLSRQIT. In terms of domain architecture, Histidine kinase spans 302–519; sequence DVSHELRTPL…CFRLTLPLVR (218 aa). His305 is subject to Phosphohistidine; by autocatalysis. Residues 524 to 565 form a disordered region; sequence TTSPLPMKPIPQPSPSGGQSPSTGPQHAKDRARQREHAERSL. Low complexity predominate over residues 538–549; it reads PSGGQSPSTGPQ. Positions 550–565 are enriched in basic and acidic residues; it reads HAKDRARQREHAERSL.

It is found in the cell membrane. It carries out the reaction ATP + protein L-histidine = ADP + protein N-phospho-L-histidine.. In terms of biological role, member of the two-component regulatory system MtrA/MtrB. Seems to function as a membrane-associated protein kinase that phosphorylates MtrA in response to environmental signals. This chain is Sensor histidine kinase MtrB (mtrB), found in Mycolicibacterium paratuberculosis (strain ATCC BAA-968 / K-10) (Mycobacterium paratuberculosis).